A 455-amino-acid polypeptide reads, in one-letter code: Transcriptional regulatory protein FlbD (455 aa).

The Response regulatory domain maps to 2–114; that stretch reads RLLVVGKLNG…LIAAVLAAVT (113 aa). The Sigma-54 factor interaction domain maps to 120–349; that stretch reads MVVRDPAMEQ…LENAMHRAVL (230 aa). ATP contacts are provided by residues 148–155 and 211–220; these read GESGSGKE and ADGGTLLLDE. Residues 416-435 constitute a DNA-binding region (H-T-H motif); the sequence is RTHAANILGISIRTLRNKLK.

It localises to the cytoplasm. In terms of biological role, activation of sigma-54-dependent flagellar gene promoters and strong negative autoregulatory effects on its own promoter. The synthesis and function of FlbD in C.crescentus is controlled by an internal cell-cycle clock. In Caulobacter vibrioides (strain ATCC 19089 / CIP 103742 / CB 15) (Caulobacter crescentus), this protein is Transcriptional regulatory protein FlbD (flbD).